The primary structure comprises 724 residues: DNA ligase (724 aa).

NAD(+)-binding positions include 44-48 (DADYD), 93-94 (SL), and glutamate 127. The active-site N6-AMP-lysine intermediate is the lysine 129. NAD(+) contacts are provided by arginine 150, glutamate 186, lysine 307, and lysine 331. Positions 437, 440, 461, and 467 each coordinate Zn(2+). In terms of domain architecture, BRCT spans 646–724 (TEGSPVAGKT…EDEWLALIGG (79 aa)).

Belongs to the NAD-dependent DNA ligase family. LigA subfamily. Mg(2+) serves as cofactor. Mn(2+) is required as a cofactor.

It catalyses the reaction NAD(+) + (deoxyribonucleotide)n-3'-hydroxyl + 5'-phospho-(deoxyribonucleotide)m = (deoxyribonucleotide)n+m + AMP + beta-nicotinamide D-nucleotide.. Its function is as follows. DNA ligase that catalyzes the formation of phosphodiester linkages between 5'-phosphoryl and 3'-hydroxyl groups in double-stranded DNA using NAD as a coenzyme and as the energy source for the reaction. It is essential for DNA replication and repair of damaged DNA. The protein is DNA ligase of Agrobacterium fabrum (strain C58 / ATCC 33970) (Agrobacterium tumefaciens (strain C58)).